The chain runs to 247 residues: Histone acetyltransferase MCC1 (247 aa).

Residues 25-198 (IHYRPINPND…DAFLFVYFIN (174 aa)) enclose the N-acetyltransferase domain.

It belongs to the acetyltransferase family.

The enzyme catalyses L-lysyl-[protein] + acetyl-CoA = N(6)-acetyl-L-lysyl-[protein] + CoA + H(+). In terms of biological role, histone acetyltransferase that probably regulates acetylation status of histone H3 during meiosis. Histone acetylation may influence recombination and chromosome segregation. The protein is Histone acetyltransferase MCC1 (MCC1) of Arabidopsis thaliana (Mouse-ear cress).